A 325-amino-acid polypeptide reads, in one-letter code: Tagatose 1,6-diphosphate aldolase (325 aa).

It belongs to the aldolase LacD family.

It carries out the reaction D-tagatofuranose 1,6-bisphosphate = D-glyceraldehyde 3-phosphate + dihydroxyacetone phosphate. The protein operates within carbohydrate metabolism; D-tagatose 6-phosphate degradation; D-glyceraldehyde 3-phosphate and glycerone phosphate from D-tagatose 6-phosphate: step 2/2. The sequence is that of Tagatose 1,6-diphosphate aldolase from Staphylococcus epidermidis (strain ATCC 12228 / FDA PCI 1200).